We begin with the raw amino-acid sequence, 839 residues long: Taste receptor type 1 member 2 (839 aa).

The first 19 residues, 1-19 (MGTRATTICSLFFLLWVLA), serve as a signal peptide directing secretion. Topologically, residues 20–566 (EPAENSDFYL…VFLEWHEAPT (547 aa)) are extracellular. N-linked (GlcNAc...) asparagine glycans are attached at residues Asn84, Asn248, Asn292, Asn312, Asn368, Asn407, Asn428, Asn487, and Asn527. The chain crosses the membrane as a helical span at residues 567 to 587 (IAVALLAALGFLSTLAILVIF). Residues 588 to 602 (WRHFQTPIVRSAGGP) are Cytoplasmic-facing. A helical transmembrane segment spans residues 603–623 (MCFLMLTLLLVAYMVVPVYVG). The Extracellular portion of the chain corresponds to 624-635 (PPKVSTCLCRQA). Residues 636–656 (LFPLCFTICISCIAVRSFQIV) form a helical membrane-spanning segment. At 657–681 (CAFKMASRFPRAYSYWVRYQGPYVS) the chain is on the cytoplasmic side. A helical membrane pass occupies residues 682-702 (MAFITVLKMVIVVIGMLATGL). Over 703 to 727 (SPTTRTDPDDPKITIVSCNPNYRNS) the chain is Extracellular. A helical membrane pass occupies residues 728-748 (LLFNTSLDLLLSVVGFSFAYM). Over 749-760 (GKELPTNYNEAK) the chain is Cytoplasmic. Residues 761–781 (FITLSMTFYFTSSVSLCTFMS) form a helical membrane-spanning segment. Topologically, residues 782–784 (AYS) are extracellular. A helical transmembrane segment spans residues 785 to 805 (GVLVTIVDLLVTVLNLLAISL). Residues 806-839 (GYFGPKCYMILFYPERNTPAYFNSMIQGYTMRRD) are Cytoplasmic-facing.

The protein belongs to the G-protein coupled receptor 3 family. TAS1R subfamily. As to quaternary structure, forms heterodimers with TAS1R3.

Its subcellular location is the cell membrane. Functionally, putative taste receptor. TAS1R2/TAS1R3 recognizes diverse natural and synthetic sweeteners. The chain is Taste receptor type 1 member 2 (TAS1R2) from Gorilla gorilla gorilla (Western lowland gorilla).